A 546-amino-acid polypeptide reads, in one-letter code: 2-isopropylmalate synthase (546 aa).

One can recognise a Pyruvate carboxyltransferase domain in the interval 8–271; sequence ILIFDTTLRD…NSFFGRSSDS (264 aa). 4 residues coordinate Mn(2+): D17, H208, H210, and N244. A regulatory domain region spans residues 408–546; the sequence is QLSHVQVSCG…EKKVFSNPKN (139 aa).

The protein belongs to the alpha-IPM synthase/homocitrate synthase family. LeuA type 1 subfamily. As to quaternary structure, homodimer. It depends on Mn(2+) as a cofactor.

Its subcellular location is the cytoplasm. The catalysed reaction is 3-methyl-2-oxobutanoate + acetyl-CoA + H2O = (2S)-2-isopropylmalate + CoA + H(+). The protein operates within amino-acid biosynthesis; L-leucine biosynthesis; L-leucine from 3-methyl-2-oxobutanoate: step 1/4. In terms of biological role, catalyzes the condensation of the acetyl group of acetyl-CoA with 3-methyl-2-oxobutanoate (2-ketoisovalerate) to form 3-carboxy-3-hydroxy-4-methylpentanoate (2-isopropylmalate). This Prochlorococcus marinus (strain MIT 9515) protein is 2-isopropylmalate synthase.